The primary structure comprises 589 residues: Protein NRT1/ PTR FAMILY 4.7 (589 aa).

Transmembrane regions (helical) follow at residues 59-79 (GMLA…AFLA), 105-125 (AFMG…DAFF), 127-147 (TFHI…VLTV), 160-180 (VFLF…KGSL), 201-221 (FFFN…VTVV), 230-250 (WSYG…VFLA), 344-364 (IVIK…CLAQ), 383-403 (FTVP…ILAP), 429-449 (IGTG…VETK), 471-491 (LPIT…ADLF), 520-540 (LAMG…VTGL), and 560-580 (FYWL…FWAS).

This sequence belongs to the major facilitator superfamily. Proton-dependent oligopeptide transporter (POT/PTR) (TC 2.A.17) family. As to expression, expressed in flowers.

The protein localises to the membrane. The protein is Protein NRT1/ PTR FAMILY 4.7 (NPF4.7) of Arabidopsis thaliana (Mouse-ear cress).